The chain runs to 171 residues: Protein GrpE (171 aa).

The disordered stretch occupies residues 1–20 (MNEEKEESPSTEAEGAGAEV).

It belongs to the GrpE family. In terms of assembly, homodimer.

The protein localises to the cytoplasm. Participates actively in the response to hyperosmotic and heat shock by preventing the aggregation of stress-denatured proteins, in association with DnaK and GrpE. It is the nucleotide exchange factor for DnaK and may function as a thermosensor. Unfolded proteins bind initially to DnaJ; upon interaction with the DnaJ-bound protein, DnaK hydrolyzes its bound ATP, resulting in the formation of a stable complex. GrpE releases ADP from DnaK; ATP binding to DnaK triggers the release of the substrate protein, thus completing the reaction cycle. Several rounds of ATP-dependent interactions between DnaJ, DnaK and GrpE are required for fully efficient folding. In Acidithiobacillus ferrooxidans (strain ATCC 23270 / DSM 14882 / CIP 104768 / NCIMB 8455) (Ferrobacillus ferrooxidans (strain ATCC 23270)), this protein is Protein GrpE.